Consider the following 230-residue polypeptide: Endonuclease NucS (230 aa).

It belongs to the NucS endonuclease family.

The protein localises to the cytoplasm. Cleaves both 3' and 5' ssDNA extremities of branched DNA structures. The sequence is that of Endonuclease NucS from Corynebacterium efficiens (strain DSM 44549 / YS-314 / AJ 12310 / JCM 11189 / NBRC 100395).